A 591-amino-acid polypeptide reads, in one-letter code: Aspartate--tRNA(Asp/Asn) ligase (591 aa).

E176 is an L-aspartate binding site. Residues 200 to 203 (QLFK) form an aspartate region. R222 serves as a coordination point for L-aspartate. Residues 222–224 (RDE) and Q231 contribute to the ATP site. H450 serves as a coordination point for L-aspartate. E484 contacts ATP. R491 serves as a coordination point for L-aspartate. 536–539 (GLDR) contributes to the ATP binding site.

The protein belongs to the class-II aminoacyl-tRNA synthetase family. Type 1 subfamily. In terms of assembly, homodimer.

Its subcellular location is the cytoplasm. It carries out the reaction tRNA(Asx) + L-aspartate + ATP = L-aspartyl-tRNA(Asx) + AMP + diphosphate. Functionally, aspartyl-tRNA synthetase with relaxed tRNA specificity since it is able to aspartylate not only its cognate tRNA(Asp) but also tRNA(Asn). Reaction proceeds in two steps: L-aspartate is first activated by ATP to form Asp-AMP and then transferred to the acceptor end of tRNA(Asp/Asn). This is Aspartate--tRNA(Asp/Asn) ligase from Bacillus cereus (strain ATCC 10987 / NRS 248).